The primary structure comprises 98 residues: MTSINLNLTVAFSLALAGVLIYRSHLMSTLLCLEGMMLSLFVMMALLISHFHMFSTSMAPIILLVFSACEAGVGLALLVKTSNNYGNDYVQNLNLLQC.

A run of 3 helical transmembrane segments spans residues 1 to 21 (MTSINLNLTVAFSLALAGVLI), 28 to 48 (STLLCLEGMMLSLFVMMALLI), and 59 to 79 (APIILLVFSACEAGVGLALLV).

It belongs to the complex I subunit 4L family. In terms of assembly, core subunit of respiratory chain NADH dehydrogenase (Complex I) which is composed of 45 different subunits.

The protein localises to the mitochondrion inner membrane. It carries out the reaction a ubiquinone + NADH + 5 H(+)(in) = a ubiquinol + NAD(+) + 4 H(+)(out). Functionally, core subunit of the mitochondrial membrane respiratory chain NADH dehydrogenase (Complex I) which catalyzes electron transfer from NADH through the respiratory chain, using ubiquinone as an electron acceptor. Part of the enzyme membrane arm which is embedded in the lipid bilayer and involved in proton translocation. The chain is NADH-ubiquinone oxidoreductase chain 4L (MT-ND4L) from Trichosurus vulpecula (Brush-tailed possum).